The following is a 174-amino-acid chain: Gamma-crystallin F (174 aa).

2 consecutive Beta/gamma crystallin 'Greek key' domains span residues 2-40 and 41-83; these read GKIT…RVDS and GCWM…HLIP. A connecting peptide region spans residues 84-87; sequence HSSS. Beta/gamma crystallin 'Greek key' domains follow at residues 88–128 and 129–171; these read HRIR…HVIE and GYWV…RRIM.

The protein belongs to the beta/gamma-crystallin family.

Crystallins are the dominant structural components of the vertebrate eye lens. The protein is Gamma-crystallin F (Crygf) of Rattus norvegicus (Rat).